We begin with the raw amino-acid sequence, 150 residues long: SsrA-binding protein (150 aa).

The disordered stretch occupies residues 130–150 (DKRESLKEKDDRREMDRMFKR).

Belongs to the SmpB family.

Its subcellular location is the cytoplasm. Required for rescue of stalled ribosomes mediated by trans-translation. Binds to transfer-messenger RNA (tmRNA), required for stable association of tmRNA with ribosomes. tmRNA and SmpB together mimic tRNA shape, replacing the anticodon stem-loop with SmpB. tmRNA is encoded by the ssrA gene; the 2 termini fold to resemble tRNA(Ala) and it encodes a 'tag peptide', a short internal open reading frame. During trans-translation Ala-aminoacylated tmRNA acts like a tRNA, entering the A-site of stalled ribosomes, displacing the stalled mRNA. The ribosome then switches to translate the ORF on the tmRNA; the nascent peptide is terminated with the 'tag peptide' encoded by the tmRNA and targeted for degradation. The ribosome is freed to recommence translation, which seems to be the essential function of trans-translation. This Phocaeicola vulgatus (strain ATCC 8482 / DSM 1447 / JCM 5826 / CCUG 4940 / NBRC 14291 / NCTC 11154) (Bacteroides vulgatus) protein is SsrA-binding protein.